The following is an 873-amino-acid chain: MLSIAKRVFWPYSSRAKGASVHKIVKSINALEGEMAALSSEALFGKTGEFRKMLSEGTVTLDDLLVPAFAVVREASRRVLDMRHFDVQLIGGIALHRGMIAEMKTGEGKTLVATLAAYLNALESKGVHVVTVNDYLAERDSEWMGKLYSALGISVGCITSSSSDEARKAAYNCDILYSTNNELGFDYLRDNMKFSRENMVQRGYNYAIVDEVDSILIDESRTPLIISGPVERDSSLYGKVDALVRDLEQEDYDIDEKSKTAFLTEDGALKVEQLLISHQLIPEGSSLYSAENIIMMHYVGQALRAHKLYFADKDYIVKNGSVVIIDEFTGRMMDGRRYSDGLHQALEAKEGVRINNENQTLASTTFQNYFRMYKRLSGMTGTAETEADEFLGTYNLQVMQIPTNVPVQRVDLDDDIYCTEEEKYEAVIDFIIECHKRKQPTLVGTISIEKSELLSKLLTMRGIKHSVLNARYHEKEAYIIAQAGKPGAVTIATNMAGRGTDIKLGGNPEMLARNELAGITDEEERAKRINKIIEQAKHDKEIVMQAGGLCIIGTERHESRRIDNQLRGRSGRQGDPGLSKFFLSLEDGLLRIFGSDKVRGMLKRLGMKRGEAIQHKWINRAIERAQKKVEARNYDIRKSLLRFDDVINEQRKVIFAQRNQILDRETYDLVPFYSNLNCDIVSRIIKEKYCDLGHRETAEELSAEVTRIYGIELDIGALSALETREEVIAYLDKVADDLLKKKADGFVHKDENLWDFAARRVLITSLDHLWTDHLAALDSLKCGINLRSVGQKDPLNEFKIEAFYLLEKMLSRFYEMVIQKLAHIELEVQQQPDDGMINLNNSTSQLFGGIARNDRCPCGSGKKFKHCHGMIKV.

ATP is bound by residues glutamine 88, 106–110 (GEGKT), and aspartate 501. Positions 856, 858, 867, and 868 each coordinate Zn(2+).

Belongs to the SecA family. In terms of assembly, monomer and homodimer. Part of the essential Sec protein translocation apparatus which comprises SecA, SecYEG and auxiliary proteins SecDF-YajC and YidC. Zn(2+) serves as cofactor.

Its subcellular location is the cell inner membrane. It is found in the cytoplasm. The enzyme catalyses ATP + H2O + cellular proteinSide 1 = ADP + phosphate + cellular proteinSide 2.. In terms of biological role, part of the Sec protein translocase complex. Interacts with the SecYEG preprotein conducting channel. Has a central role in coupling the hydrolysis of ATP to the transfer of proteins into and across the cell membrane, serving both as a receptor for the preprotein-SecB complex and as an ATP-driven molecular motor driving the stepwise translocation of polypeptide chains across the membrane. The chain is Protein translocase subunit SecA from Anaplasma phagocytophilum (strain HZ).